The following is a 538-amino-acid chain: Atos homolog protein B (538 aa).

Over residues 1–18 the composition is skewed to low complexity; the sequence is MRHVQAEPSPSSEPEAGP. Disordered stretches follow at residues 1–114 and 133–300; these read MRHV…LGVA and TSSW…VLDP. The segment covering 227-238 has biased composition (pro residues); sequence HTPPGPGPPGPC. Residues S254 and S255 each carry the phosphoserine modification. The required for macropage invasion stretch occupies residues 348–430; that stretch reads LLGNFEESLL…VPKVGTVQVT (83 aa). Residues 436–444 form a transactivation domain 1 (TAD1) region; the sequence is QTVVKMFLV.

This sequence belongs to the ATOS family.

The protein localises to the nucleus. Transcription regulator that may syncronize transcriptional and translational programs. The polypeptide is Atos homolog protein B (Homo sapiens (Human)).